Here is a 463-residue protein sequence, read N- to C-terminus: FAD-dependent monooxygenase ausM (463 aa).

FAD contacts are provided by glutamate 40, glycine 54, and arginine 113. The active site involves tyrosine 217. The FAD site is built by aspartate 309 and alanine 322. A helical transmembrane segment spans residues 443–463 (VPWLVISLPVLASVLCYLMFA).

The protein belongs to the paxM FAD-dependent monooxygenase family. FAD serves as cofactor.

The protein resides in the membrane. Its pathway is secondary metabolite biosynthesis; terpenoid biosynthesis. In terms of biological role, FAD-dependent monooxygenase; part of the gene cluster that mediates the biosynthesis of calidodehydroaustin, a fungal meroterpenoid. The first step of the pathway is the synthesis of 3,5-dimethylorsellinic acid by the polyketide synthase ausA. 3,5-dimethylorsellinic acid is then prenylated by the polyprenyl transferase ausN. Further epoxidation by the FAD-dependent monooxygenase ausM and cyclization by the probable terpene cyclase ausL lead to the formation of protoaustinoid A. Protoaustinoid A is then oxidized to spiro-lactone preaustinoid A3 by the combined action of the FAD-binding monooxygenases ausB and ausC, and the dioxygenase ausE. Acid-catalyzed keto-rearrangement and ring contraction of the tetraketide portion of preaustinoid A3 by ausJ lead to the formation of preaustinoid A4. The aldo-keto reductase ausK, with the help of ausH, is involved in the next step by transforming preaustinoid A4 into isoaustinone which is in turn hydroxylated by the P450 monooxygenase ausI to form austinolide. The cytochrome P450 monooxygenase ausG modifies austinolide to austinol. Austinol is further acetylated to austin by the O-acetyltransferase ausP, which spontaneously changes to dehydroaustin. The cytochrome P450 monooxygenase ausR then converts dehydroaustin is into 7-dehydrodehydroaustin. The hydroxylation catalyzed by ausR permits the O-acetyltransferase ausQ to add an additional acetyl group to the molecule, leading to the formation of acetoxydehydroaustin. The short chain dehydrogenase ausT catalyzes the reduction of the double bond present between carbon atoms 1 and 2 to convert 7-dehydrodehydroaustin into 1,2-dihydro-7-hydroxydehydroaustin. AusQ catalyzes not only an acetylation reaction but also the addition of the PKS ausV diketide product to 1,2-dihydro-7-hydroxydehydroaustin, forming precalidodehydroaustin. Finally, the iron/alpha-ketoglutarate-dependent dioxygenase converts precalidodehydroaustin into calidodehydroaustin. In Aspergillus calidoustus, this protein is FAD-dependent monooxygenase ausM.